Here is a 553-residue protein sequence, read N- to C-terminus: CTP synthase (553 aa).

An amidoligase domain region spans residues 1-270 (MTKYVFVTGG…DDLICRELEL (270 aa)). Ser13 is a CTP binding site. Residue Ser13 participates in UTP binding. ATP-binding positions include 14 to 19 (SLGKGI) and Asp71. Asp71 and Glu144 together coordinate Mg(2+). Residues 151–153 (DIE), 191–196 (KTKPTQ), and Lys227 each bind CTP. UTP is bound by residues 191–196 (KTKPTQ) and Lys227. One can recognise a Glutamine amidotransferase type-1 domain in the interval 295 to 547 (TIGMVGKYVE…IKAALIHQDA (253 aa)). Gly356 provides a ligand contact to L-glutamine. Cys383 (nucleophile; for glutamine hydrolysis) is an active-site residue. L-glutamine is bound by residues 384–387 (LGMQ), Glu407, and Arg473. Residues His520 and Glu522 contribute to the active site.

This sequence belongs to the CTP synthase family. In terms of assembly, homotetramer.

It carries out the reaction UTP + L-glutamine + ATP + H2O = CTP + L-glutamate + ADP + phosphate + 2 H(+). The enzyme catalyses L-glutamine + H2O = L-glutamate + NH4(+). It catalyses the reaction UTP + NH4(+) + ATP = CTP + ADP + phosphate + 2 H(+). It participates in pyrimidine metabolism; CTP biosynthesis via de novo pathway; CTP from UDP: step 2/2. With respect to regulation, allosterically activated by GTP, when glutamine is the substrate; GTP has no effect on the reaction when ammonia is the substrate. The allosteric effector GTP functions by stabilizing the protein conformation that binds the tetrahedral intermediate(s) formed during glutamine hydrolysis. Inhibited by the product CTP, via allosteric rather than competitive inhibition. In terms of biological role, catalyzes the ATP-dependent amination of UTP to CTP with either L-glutamine or ammonia as the source of nitrogen. Regulates intracellular CTP levels through interactions with the four ribonucleotide triphosphates. The protein is CTP synthase of Polynucleobacter asymbioticus (strain DSM 18221 / CIP 109841 / QLW-P1DMWA-1) (Polynucleobacter necessarius subsp. asymbioticus).